The chain runs to 231 residues: Orotidine 5'-phosphate decarboxylase (231 aa).

Substrate contacts are provided by residues D11, K34, 61-70 (DLKLHDIPNT), T117, R179, Q188, G208, and R209. The Proton donor role is filled by K63.

Belongs to the OMP decarboxylase family. Type 1 subfamily. Homodimer.

It catalyses the reaction orotidine 5'-phosphate + H(+) = UMP + CO2. It functions in the pathway pyrimidine metabolism; UMP biosynthesis via de novo pathway; UMP from orotate: step 2/2. Catalyzes the decarboxylation of orotidine 5'-monophosphate (OMP) to uridine 5'-monophosphate (UMP). In Streptococcus thermophilus (strain CNRZ 1066), this protein is Orotidine 5'-phosphate decarboxylase.